The primary structure comprises 217 residues: Large ribosomal subunit protein uL3 (217 aa).

The span at G133 to V145 shows a compositional bias: polar residues. The tract at residues G133–Q153 is disordered. Position 153 is an N5-methylglutamine (Q153).

This sequence belongs to the universal ribosomal protein uL3 family. Part of the 50S ribosomal subunit. Forms a cluster with proteins L14 and L19. Methylated by PrmB.

Its function is as follows. One of the primary rRNA binding proteins, it binds directly near the 3'-end of the 23S rRNA, where it nucleates assembly of the 50S subunit. The polypeptide is Large ribosomal subunit protein uL3 (Ralstonia pickettii (strain 12J)).